The following is a 341-amino-acid chain: Fructose-1,6-bisphosphatase, cytosolic (341 aa).

The Mg(2+) site is built by Glu71, Glu100, Asp121, Leu123, and Asp124. Substrate contacts are provided by residues 124-127, Asn215, Tyr247, Tyr267, and Lys277; that span reads DGSS. Residue Glu283 coordinates Mg(2+).

It belongs to the FBPase class 1 family. Requires Mg(2+) as cofactor.

The protein resides in the cytoplasm. The enzyme catalyses beta-D-fructose 1,6-bisphosphate + H2O = beta-D-fructose 6-phosphate + phosphate. The protein is Fructose-1,6-bisphosphatase, cytosolic of Spinacia oleracea (Spinach).